Here is a 325-residue protein sequence, read N- to C-terminus: 6-phosphogluconolactonase 3, chloroplastic (325 aa).

A chloroplast-targeting transit peptide spans 1 to 68 (MASSSCFLRS…KSSDTRRKVK (68 aa)). A disordered region spans residues 51–73 (SIGTGSTKKSSDTRRKVKSMATT). Positions 323–325 (SKL) match the Microbody targeting signal motif.

Belongs to the glucosamine/galactosamine-6-phosphate isomerase family. 6-phosphogluconolactonase subfamily. As to quaternary structure, interacts with TRXM2. Expressed in roots, leaves and shoots.

It is found in the plastid. The protein resides in the chloroplast. It localises to the peroxisome. The enzyme catalyses 6-phospho-D-glucono-1,5-lactone + H2O = 6-phospho-D-gluconate + H(+). Its pathway is carbohydrate degradation; pentose phosphate pathway; D-ribulose 5-phosphate from D-glucose 6-phosphate (oxidative stage): step 2/3. Functionally, catalyzes the hydrolysis of 6-phosphogluconolactone to 6-phosphogluconate. Involved in the regulation of cellular redox state; enzymatic activity is required for this function. Required for sugar-dependent expression of nitrate assimilation genes in the nucleus of root cells. The polypeptide is 6-phosphogluconolactonase 3, chloroplastic (Arabidopsis thaliana (Mouse-ear cress)).